Consider the following 316-residue polypeptide: Ribosomal RNA small subunit methyltransferase H (316 aa).

Residues 35–37 (SGH), Asp55, Phe84, Asp105, and Gln112 each bind S-adenosyl-L-methionine.

This sequence belongs to the methyltransferase superfamily. RsmH family.

It localises to the cytoplasm. It carries out the reaction cytidine(1402) in 16S rRNA + S-adenosyl-L-methionine = N(4)-methylcytidine(1402) in 16S rRNA + S-adenosyl-L-homocysteine + H(+). Functionally, specifically methylates the N4 position of cytidine in position 1402 (C1402) of 16S rRNA. The chain is Ribosomal RNA small subunit methyltransferase H from Streptococcus pyogenes serotype M6 (strain ATCC BAA-946 / MGAS10394).